A 367-amino-acid chain; its full sequence is GTP cyclohydrolase FolE2 (367 aa).

Belongs to the GTP cyclohydrolase IV family.

It catalyses the reaction GTP + H2O = 7,8-dihydroneopterin 3'-triphosphate + formate + H(+). Its pathway is cofactor biosynthesis; 7,8-dihydroneopterin triphosphate biosynthesis; 7,8-dihydroneopterin triphosphate from GTP: step 1/1. Functionally, converts GTP to 7,8-dihydroneopterin triphosphate. In Roseobacter denitrificans (strain ATCC 33942 / OCh 114) (Erythrobacter sp. (strain OCh 114)), this protein is GTP cyclohydrolase FolE2.